The sequence spans 510 residues: Arginine biosynthesis bifunctional protein ArgJ, mitochondrial (510 aa).

The segment covering 57-70 (TSTNEPSAATTNVP) has biased composition (polar residues). The segment at 57–76 (TSTNEPSAATTNVPHPQEAP) is disordered. Residues Thr222, Lys248, Thr267, and Glu364 each contribute to the substrate site. Residue Thr267 is the Nucleophile of the active site.

It belongs to the ArgJ family. In terms of assembly, heterodimer of an alpha and a beta chain. Post-translationally, the alpha and beta chains are autoproteolytically processed from a single precursor protein within the mitochondrion.

The protein resides in the mitochondrion matrix. It catalyses the reaction N(2)-acetyl-L-ornithine + L-glutamate = N-acetyl-L-glutamate + L-ornithine. It carries out the reaction L-glutamate + acetyl-CoA = N-acetyl-L-glutamate + CoA + H(+). It functions in the pathway amino-acid biosynthesis; L-arginine biosynthesis; L-ornithine and N-acetyl-L-glutamate from L-glutamate and N(2)-acetyl-L-ornithine (cyclic): step 1/1. It participates in amino-acid biosynthesis; L-arginine biosynthesis; N(2)-acetyl-L-ornithine from L-glutamate: step 1/4. In terms of biological role, catalyzes two activities which are involved in the cyclic version of arginine biosynthesis: the synthesis of acetylglutamate from glutamate and acetyl-CoA, and of ornithine by transacetylation between acetylornithine and glutamate. This Malassezia globosa (strain ATCC MYA-4612 / CBS 7966) (Dandruff-associated fungus) protein is Arginine biosynthesis bifunctional protein ArgJ, mitochondrial.